We begin with the raw amino-acid sequence, 317 residues long: Olfactory receptor 10A5 (317 aa).

Residues Met-1 to Ser-26 are Extracellular-facing. Asn-5 carries an N-linked (GlcNAc...) asparagine glycan. Residues Leu-27–Ile-47 form a helical membrane-spanning segment. Topologically, residues Leu-48–Met-55 are cytoplasmic. A helical membrane pass occupies residues Leu-56–Leu-76. Residues Val-77–Thr-100 lie on the Extracellular side of the membrane. A disulfide bridge connects residues Cys-98 and Cys-190. Residues Gln-101–Tyr-121 traverse the membrane as a helical segment. The Cytoplasmic segment spans residues Asp-122–Arg-140. A helical transmembrane segment spans residues Thr-141–Thr-161. At Thr-162–Ile-198 the chain is on the extracellular side. A helical transmembrane segment spans residues Tyr-199 to Ser-218. The Cytoplasmic segment spans residues Tyr-219 to Ala-238. Residues Phe-239–Thr-259 form a helical membrane-spanning segment. At Tyr-260 to Lys-272 the chain is on the extracellular side. Residues Lys-273–Leu-293 traverse the membrane as a helical segment. The Cytoplasmic segment spans residues Arg-294–Pro-317.

This sequence belongs to the G-protein coupled receptor 1 family. Expressed in the tongue.

Its subcellular location is the cell membrane. Functionally, odorant receptor (Potential). May be involved in taste perception. In Homo sapiens (Human), this protein is Olfactory receptor 10A5 (OR10A5).